The sequence spans 362 residues: tRNA-specific 2-thiouridylase MnmA (362 aa).

Residues 6-13 (AMSGGVDS) and leucine 32 each bind ATP. Cysteine 101 acts as the Nucleophile in catalysis. A disulfide bridge links cysteine 101 with cysteine 197. Glycine 125 contributes to the ATP binding site. Residues 147–149 (KDQ) are interaction with tRNA. Residue cysteine 197 is the Cysteine persulfide intermediate of the active site.

Belongs to the MnmA/TRMU family.

It localises to the cytoplasm. The enzyme catalyses S-sulfanyl-L-cysteinyl-[protein] + uridine(34) in tRNA + AH2 + ATP = 2-thiouridine(34) in tRNA + L-cysteinyl-[protein] + A + AMP + diphosphate + H(+). Functionally, catalyzes the 2-thiolation of uridine at the wobble position (U34) of tRNA, leading to the formation of s(2)U34. This Saccharopolyspora erythraea (strain ATCC 11635 / DSM 40517 / JCM 4748 / NBRC 13426 / NCIMB 8594 / NRRL 2338) protein is tRNA-specific 2-thiouridylase MnmA.